Reading from the N-terminus, the 252-residue chain is Triosephosphate isomerase (252 aa).

10-12 (NWK) is a binding site for substrate. Histidine 96 (electrophile) is an active-site residue. Catalysis depends on glutamate 168, which acts as the Proton acceptor. Substrate-binding positions include glycine 174, serine 214, and 235 to 236 (GG).

This sequence belongs to the triosephosphate isomerase family. As to quaternary structure, homodimer.

It localises to the cytoplasm. The enzyme catalyses D-glyceraldehyde 3-phosphate = dihydroxyacetone phosphate. It participates in carbohydrate biosynthesis; gluconeogenesis. It functions in the pathway carbohydrate degradation; glycolysis; D-glyceraldehyde 3-phosphate from glycerone phosphate: step 1/1. Its function is as follows. Involved in the gluconeogenesis. Catalyzes stereospecifically the conversion of dihydroxyacetone phosphate (DHAP) to D-glyceraldehyde-3-phosphate (G3P). This is Triosephosphate isomerase from Lactobacillus helveticus (strain DPC 4571).